We begin with the raw amino-acid sequence, 344 residues long: Anthranilate phosphoribosyltransferase (344 aa).

5-phospho-alpha-D-ribose 1-diphosphate contacts are provided by residues glycine 84, 87–88 (GD), threonine 92, 94–97 (NIST), 112–120 (KHGNRSVSS), and serine 124. An anthranilate-binding site is contributed by glycine 84. Serine 96 contributes to the Mg(2+) binding site. Position 115 (asparagine 115) interacts with anthranilate. Arginine 170 provides a ligand contact to anthranilate. 2 residues coordinate Mg(2+): aspartate 229 and glutamate 230.

Belongs to the anthranilate phosphoribosyltransferase family. As to quaternary structure, homodimer. The cofactor is Mg(2+).

It carries out the reaction N-(5-phospho-beta-D-ribosyl)anthranilate + diphosphate = 5-phospho-alpha-D-ribose 1-diphosphate + anthranilate. The protein operates within amino-acid biosynthesis; L-tryptophan biosynthesis; L-tryptophan from chorismate: step 2/5. Its function is as follows. Catalyzes the transfer of the phosphoribosyl group of 5-phosphorylribose-1-pyrophosphate (PRPP) to anthranilate to yield N-(5'-phosphoribosyl)-anthranilate (PRA). In Xylella fastidiosa (strain 9a5c), this protein is Anthranilate phosphoribosyltransferase.